The sequence spans 161 residues: Protein PLANT CADMIUM RESISTANCE 12 (161 aa).

The chain crosses the membrane as a helical span at residues 71–89 (AGLIHLALGFIGCSWLYAF).

Belongs to the cornifelin family.

Its subcellular location is the membrane. May be involved in heavy metals transport. The polypeptide is Protein PLANT CADMIUM RESISTANCE 12 (PCR12) (Arabidopsis thaliana (Mouse-ear cress)).